The sequence spans 185 residues: Large ribosomal subunit protein uL5 (185 aa).

It belongs to the universal ribosomal protein uL5 family. As to quaternary structure, part of the 50S ribosomal subunit; part of the 5S rRNA/L5/L18/L25 subcomplex. Contacts the 5S rRNA and the P site tRNA. Forms a bridge to the 30S subunit in the 70S ribosome.

This is one of the proteins that bind and probably mediate the attachment of the 5S RNA into the large ribosomal subunit, where it forms part of the central protuberance. In the 70S ribosome it contacts protein S13 of the 30S subunit (bridge B1b), connecting the 2 subunits; this bridge is implicated in subunit movement. Contacts the P site tRNA; the 5S rRNA and some of its associated proteins might help stabilize positioning of ribosome-bound tRNAs. The sequence is that of Large ribosomal subunit protein uL5 from Bradyrhizobium sp. (strain BTAi1 / ATCC BAA-1182).